The following is a 343-amino-acid chain: Ubiquitin thioesterase OTU1 (343 aa).

The interval 45–123 (RCKAKGGTHL…IVEEDQTRPK (79 aa)) is UBX-like. The region spanning 144–269 (LTRTAVPADN…GIHYDPLQRN (126 aa)) is the OTU domain. The tract at residues 149–155 (VPADNSC) is cys-loop. Asp152 is a catalytic residue. Cys155 acts as the Nucleophile in catalysis. Positions 208 to 218 (IRRDDTWGGAI) are variable-loop. Residues 258-262 (YDGIH) are his-loop. Ile261 lines the substrate pocket. The active site involves His262. The S2 site stretch occupies residues 286–291 (DIVLVQ). Residues 313 to 337 (LRCMICQKGLTGQAEARDHARETGH) form a C2H2-type zinc finger. His337 is a catalytic residue.

Interacts with VCP; the interaction is direct. Interacts with FAF2/UBXD8. Interacts with DERL1; however interaction is dependent on the UBAX-like region, suggesting that it may be indirect. Interacts with PLAA, UBXN6 and VCP; may form a complex involved in macroautophagy.

It localises to the cytoplasm. It catalyses the reaction Thiol-dependent hydrolysis of ester, thioester, amide, peptide and isopeptide bonds formed by the C-terminal Gly of ubiquitin (a 76-residue protein attached to proteins as an intracellular targeting signal).. Hydrolase that can remove conjugated ubiquitin from proteins and participates in endoplasmic reticulum-associated degradation (ERAD) for misfolded lumenal proteins. May act by triming the ubiquitin chain on the associated substrate to facilitate their threading through the VCP/p97 pore. Ubiquitin moieties on substrates may present a steric impediment to the threading process when the substrate is transferred to the VCP pore and threaded through VCP's axial channel. Mediates deubiquitination of 'Lys-27'-, 'Lys-29'- and 'Lys-33'-linked polyubiquitin chains. Also able to hydrolyze 'Lys-11'-linked ubiquitin chains. Cleaves both polyubiquitin and di-ubiquitin. May play a role in macroautophagy, regulating for instance the clearance of damaged lysosomes. May recruit PLAA, UBXN6 and VCP to damaged lysosome membranes decorated with K48-linked ubiquitin chains and remove these chains allowing autophagosome formation. The polypeptide is Ubiquitin thioesterase OTU1 (Yod1) (Mus musculus (Mouse)).